Reading from the N-terminus, the 530-residue chain is DNA damage-binding protein cmr1 (530 aa).

Disordered stretches follow at residues 34 to 115 (VGLF…RKSD) and 224 to 250 (TKPVSAATHDEDEEDDDDDPDPVLTTL). Residues 52–62 (AKKKKPAPKKV) are compositionally biased toward basic residues. The span at 89–108 (EVAKRKADEHDAALQEAERA) shows a compositional bias: basic and acidic residues. The WD 1 repeat unit spans residues 188–229 (LTPERIYAMTFHPSESKPLIFAGDKMGHLGVLDASQTKPVSA). Over residues 233–244 (DEDEEDDDDDPD) the composition is skewed to acidic residues. 6 WD repeats span residues 252-292 (PHTR…SVER), 302-339 (VPISGLDMALDDPHCLYWTTLDGEFGRYDMRTPRQDSA), 344-384 (LSDK…HKSP), 389-430 (EHES…ASWK), 453-496 (GRWV…LAQL), and 499-530 (DGITAVPAVAVFHRSKNWVAGGTASGKICLWM).

Belongs to the WD repeat DDB2/WDR76 family.

In terms of biological role, DNA-binding protein that binds to both single- and double-stranded DNA. Binds preferentially to UV-damaged DNA. May be involved in DNA-metabolic processes. This is DNA damage-binding protein cmr1 from Aspergillus terreus (strain NIH 2624 / FGSC A1156).